We begin with the raw amino-acid sequence, 553 residues long: Zinc finger protein 324A (553 aa).

Residues 1-72 (MAFEDVAVYF…SGTDTTLSRT (72 aa)) form the KRAB domain. The short motif at 130–135 (PSRERK) is the Nuclear localization signal element. Residues 186-221 (GRQPRTPERQKPCAQEVPGRTFGSAQDLEAAGGRGH) form a disordered region. 9 consecutive C2H2-type zinc fingers follow at residues 257 to 279 (FECR…LRTH), 285 to 307 (YECA…QRIH), 313 to 335 (YACP…QRIH), 341 to 363 (FRCS…RKIH), 369 to 391 (YACA…ERTH), 397 to 419 (FVCA…QRVH), 425 to 447 (FACP…QLLH), 453 to 475 (FRCV…RRIH), and 481 to 503 (FVCT…QRIH). The segment at 502-553 (IHTGEKTVRRSRASLHPQARSVAGASSEGAPAKETEPTPASGPAAVSQPAEV) is disordered.

The protein belongs to the krueppel C2H2-type zinc-finger protein family. In terms of tissue distribution, expressed at high levels in the spleen, thymus, and PBMC, at low levels in the prostate, ovary, small intestine, colon (mucosal lining), placenta, lung, and pancreas, and very weakly expressed in the liver and kidney.

Its subcellular location is the nucleus. In terms of biological role, may be involved in transcriptional regulation. May be involved in regulation of cell proliferation. The sequence is that of Zinc finger protein 324A (ZNF324) from Homo sapiens (Human).